We begin with the raw amino-acid sequence, 513 residues long: MSTHFVDRVVVHASGGDGGNGCASVHREKFKPLGGPDGGNGGKGGDVILEVDPQVTTLLDLQRRPHRSAPDGRFGMGSHRNGADGDDLVIGVPDGTIVRSASGELLADLVGPGTRYVAAPGGRGGLGNAALASAKRKAPGFALLGEPGEVLDLHLEVKTLADVALVGFPSAGKSSLVAALSAARPKIADYPFTTLVPNLGVVEAGSTRYTVADVPGLIPGASEGRGLGLDFLRHVERCVALVHVLDGANLETDRDPVSDLEAIEKELAAYRVDDGAVPLQDRPRIIVINKADVPDARDMAEIVRADLEEQGAPVFVVSAVAHTGLRELSFAMAELVSAARAAEPEAVPTRIVLSPRAVDDQGFKVTREEYGDQENRQVRFRVRGEKPRRWVRQTDFTNDEAVGYLADRLARLGVEDELFKAGATPGAEVVIGDDANAVVFDWEPTMHAGAEVLGQRGSDLRLEDHSRPTRDEKRLQERERRAAKVTARDELEAERRAGHWTAADEADEELSQR.

The 158-residue stretch at 3 to 160 folds into the Obg domain; sequence THFVDRVVVH…LDLHLEVKTL (158 aa). One can recognise an OBG-type G domain in the interval 161-337; that stretch reads ADVALVGFPS…LSFAMAELVS (177 aa). GTP is bound by residues 167–174, 192–196, 213–216, 289–292, and 318–320; these read GFPSAGKS, FTTLV, DVPG, NKAD, and SAV. Residues S174 and T194 each coordinate Mg(2+). One can recognise an OCT domain in the interval 355–444; that stretch reads PRAVDDQGFK…ANAVVFDWEP (90 aa). A disordered region spans residues 457 to 513; it reads GSDLRLEDHSRPTRDEKRLQERERRAAKVTARDELEAERRAGHWTAADEADEELSQR. Residues 458–497 are compositionally biased toward basic and acidic residues; sequence SDLRLEDHSRPTRDEKRLQERERRAAKVTARDELEAERRA. Positions 504–513 are enriched in acidic residues; it reads DEADEELSQR.

This sequence belongs to the TRAFAC class OBG-HflX-like GTPase superfamily. OBG GTPase family. In terms of assembly, monomer. The cofactor is Mg(2+).

It localises to the cytoplasm. Functionally, an essential GTPase which binds GTP, GDP and possibly (p)ppGpp with moderate affinity, with high nucleotide exchange rates and a fairly low GTP hydrolysis rate. Plays a role in control of the cell cycle, stress response, ribosome biogenesis and in those bacteria that undergo differentiation, in morphogenesis control. In Kineococcus radiotolerans (strain ATCC BAA-149 / DSM 14245 / SRS30216), this protein is GTPase Obg.